Reading from the N-terminus, the 579-residue chain is Small conductance calcium-activated potassium channel protein 2 (579 aa).

Disordered stretches follow at residues 1-54 and 90-115; these read MSSC…AAAA and TGGG…KKNQ. Positions 90-103 are enriched in gly residues; it reads TGGGGGGGGSGHGS. The chain crosses the membrane as a helical span at residues 138 to 158; sequence ALIFGMFGIVVMVIETELSWG. Tyr160 bears the Phosphotyrosine mark. Residues 168–188 traverse the membrane as a helical segment; that stretch reads LALKCLISLSTIILLGLIIVY. The helical transmembrane segment at 214-234 threads the bilayer; sequence IFFICLEILVCAIHPIPGNYT. A helical membrane pass occupies residues 256–276; that stretch reads IILSIPMFLRLYLIARVMLLH. Residues 305 to 325 traverse the membrane as a helical segment; it reads LMTICPGTVLLVFSISLWIIA. An intramembrane region (pore-forming) is located at residues 345–365; the sequence is FLGAMWLISITFLSIGYGDMV. The chain crosses the membrane as a helical span at residues 374-394; the sequence is VCLLTGIMGAGCTALVVAVVA. The tract at residues 412 to 488 is calmodulin-binding; the sequence is DTQLTKRVKN…LVDLAKTQNI (77 aa). A disordered region spans residues 551-579; the sequence is VTYNAERSRSSSRRRRSSSTAPPTSSESS. Residues 568-579 are compositionally biased toward low complexity; the sequence is SSTAPPTSSESS.

Belongs to the potassium channel KCNN family. KCa2.2/KCNN2 subfamily. As to quaternary structure, homodimer. Heteromultimer with KCNN1 and KCNN3. The complex is composed of 4 channel subunits each of which binds to a calmodulin subunit which regulates the channel activity through calcium-binding. Interacts (via N-terminal domain) with MPP2. Expressed in atrial myocytes (at protein level). Widely expressed.

The protein localises to the membrane. It is found in the cytoplasm. Its subcellular location is the myofibril. The protein resides in the sarcomere. It localises to the z line. It carries out the reaction K(+)(in) = K(+)(out). Its activity is regulated as follows. Inhibited by bee venom neurotoxin apamin. Inhibited by UCL 1684 and tetraethylammonium (TEA). Functionally, small conductance calcium-activated potassium channel that mediates the voltage-independent transmembrane transfer of potassium across the cell membrane through a constitutive interaction with calmodulin which binds the intracellular calcium allowing its opening. The current is characterized by a voltage-independent activation, an intracellular calcium concentration increase-dependent activation and a single-channel conductance of about 3 picosiemens. Also presents an inwardly rectifying current, thus reducing its already small outward conductance of potassium ions, which is particularly the case when the membrane potential displays positive values, above + 20 mV. The inward rectification could be due to a blockade of the outward current by intracellular divalent cations such as calcium and magnesium and could also be due to an intrinsic property of the channel pore, independent of intracellular divalent ions. There are three positively charged amino acids in the S6 transmembrane domain, close to the pore, that collectively control the conductance and rectification through an electrostatic mechanism. Additionally, electrostatic contributions from these residues also play an important role in determining the intrinsic open probability of the channel in the absence of calcium, affecting the apparent calcium affinity for activation. Forms an heteromeric complex with calmodulin, which is constitutively associated in a calcium-independent manner. Channel opening is triggered when calcium binds the calmodulin resulting in a rotary movement leading to the formation of the dimeric complex to open the gate. Plays a role in the repolarization phase of cardiac action potential. The protein is Small conductance calcium-activated potassium channel protein 2 of Homo sapiens (Human).